A 340-amino-acid polypeptide reads, in one-letter code: Ribose-phosphate pyrophosphokinase (340 aa).

ATP contacts are provided by residues 47–49 (NGE) and 106–107 (RQ). Residues histidine 140 and aspartate 182 each contribute to the Mg(2+) site. The active site involves lysine 206. D-ribose 5-phosphate is bound by residues arginine 208, aspartate 234, and 238-242 (DTAGT).

It belongs to the ribose-phosphate pyrophosphokinase family. Class I subfamily. In terms of assembly, homohexamer. The cofactor is Mg(2+).

Its subcellular location is the cytoplasm. It catalyses the reaction D-ribose 5-phosphate + ATP = 5-phospho-alpha-D-ribose 1-diphosphate + AMP + H(+). The protein operates within metabolic intermediate biosynthesis; 5-phospho-alpha-D-ribose 1-diphosphate biosynthesis; 5-phospho-alpha-D-ribose 1-diphosphate from D-ribose 5-phosphate (route I): step 1/1. Involved in the biosynthesis of the central metabolite phospho-alpha-D-ribosyl-1-pyrophosphate (PRPP) via the transfer of pyrophosphoryl group from ATP to 1-hydroxyl of ribose-5-phosphate (Rib-5-P). The chain is Ribose-phosphate pyrophosphokinase from Bifidobacterium longum (strain NCC 2705).